Reading from the N-terminus, the 248-residue chain is Caffeoyl-CoA O-methyltransferase 3 (248 aa).

Residue lysine 22 participates in substrate binding. S-adenosyl-L-methionine is bound by residues threonine 64, glutamate 86, 88-89 (GV), serine 94, aspartate 112, and alanine 141. Aspartate 164 serves as a coordination point for substrate. Aspartate 164 provides a ligand contact to a divalent metal cation. Residue aspartate 166 participates in S-adenosyl-L-methionine binding. A divalent metal cation contacts are provided by aspartate 190 and asparagine 191. Residue asparagine 195 participates in substrate binding.

Belongs to the class I-like SAM-binding methyltransferase superfamily. Cation-dependent O-methyltransferase family. CCoAMT subfamily. Requires a divalent metal cation as cofactor. In terms of tissue distribution, mostly expressed in petal limbs and tubes, and, at low levels, in stems, roots and leaves.

It localises to the cytoplasm. It is found in the cytosol. The catalysed reaction is (E)-caffeoyl-CoA + S-adenosyl-L-methionine = (E)-feruloyl-CoA + S-adenosyl-L-homocysteine + H(+). It carries out the reaction (E)-5-hydroxyferuloyl-CoA + S-adenosyl-L-methionine = (E)-sinapoyl-CoA + S-adenosyl-L-homocysteine + H(+). Its pathway is aromatic compound metabolism; phenylpropanoid biosynthesis. Involved in the production of floral volatile phenylpropanoids in flowers of fragrant cultivars (e.g. cv. Mitchell and cv. V26) from cinnamic acid, a common precursor with the anthocyanin biosynthesis pathway involved in flower pigmentation. Methylates caffeoyl-CoA to feruloyl-CoA, also able to methylate 5-hydroxyferuloyl-CoA. The protein is Caffeoyl-CoA O-methyltransferase 3 of Petunia hybrida (Petunia).